A 321-amino-acid chain; its full sequence is Chlorohydroquinone/hydroquinone 1,2-dioxygenase (321 aa).

2 VOC domains span residues 10–138 and 160–282; these read GLHH…IIEQ and GFHS…ASVT. Residues H162, H229, and E278 each contribute to the Fe cation site.

Belongs to the extradiol ring-cleavage dioxygenase family. The cofactor is Fe(2+).

The enzyme catalyses hydroquinone + O2 = (2E,4Z)-4-hydroxy-6-oxohexa-2,4-dienoate + H(+). It catalyses the reaction chlorohydroquinone + O2 = 5-chlorocarbonyl-4-hydroxy-penta-2,4-dienoate + H(+). It participates in xenobiotic degradation; gamma-hexachlorocyclohexane degradation. Its function is as follows. Cleaves aromatic rings with two hydroxyl groups at para positions with consumption of O(2). Catalyzes the cleavage of chlorohydroquinone (CHQ), as part of the gamma-hexachlorocyclohexane (gamma-HCH or lindane) degradation pathway, producing 5-chlorocarbonyl-4-hydroxy-penta-2,4-dienoate as an intermediate product that can react with water yielding maleylacetate. This degradation pathway allows S.japonicum UT26 to grow on gamma-HCH as the sole source of carbon and energy. Can also use hydroquinone (HQ) as substrate, leading to gamma-hydroxymuconic semialdehyde. Is not able to convert catechol, contrary to meta-cleavage dioxygenases. The chain is Chlorohydroquinone/hydroquinone 1,2-dioxygenase from Sphingobium indicum (strain DSM 16413 / CCM 7287 / MTCC 6362 / UT26 / NBRC 101211 / UT26S) (Sphingobium japonicum).